The sequence spans 423 residues: MTDRLIIQGGKKLSGTLQVDGAKNSAVALIPAAILAESEVVLEGLPDISDVYTLYDILEELGGSVRYDNKTAIIDPTDMLSMPLPSGNVKKLRASYYLMGAMLGRFKKAVIGLPGGCYLGPRPIDQHIKGFEALGAKVTNEQGAIYLRADELKGARIYLDVVSVGATINIMLAAVRAKGKTVIENAAKEPEIIDVATLLTNMGAIIKGAGTDTIRITGVDHLHGCHHTIIPDRIEAGTFMVLAAASGKGIRIENVIPTHLEGIIAKLTEMGVPMDIEEDSIFIGEVENIKKVDIKTYAYPGFPTDLQQPLTALLTRAEGSSVITDTIYPSRFKHIAELERMGGKFKLEGRSAVISGPAKLQGSKVTATDLRAGAALVIAGLLAEGRTEIHGVEHIERGYSKIIEKLSAIGADITRSSTAETNI.

23–24 (KN) is a binding site for phosphoenolpyruvate. Arginine 93 lines the UDP-N-acetyl-alpha-D-glucosamine pocket. Cysteine 117 (proton donor) is an active-site residue. Cysteine 117 carries the 2-(S-cysteinyl)pyruvic acid O-phosphothioketal modification. UDP-N-acetyl-alpha-D-glucosamine contacts are provided by residues 122–126 (RPIDQ), aspartate 305, and isoleucine 327.

Belongs to the EPSP synthase family. MurA subfamily.

The protein resides in the cytoplasm. The catalysed reaction is phosphoenolpyruvate + UDP-N-acetyl-alpha-D-glucosamine = UDP-N-acetyl-3-O-(1-carboxyvinyl)-alpha-D-glucosamine + phosphate. It participates in cell wall biogenesis; peptidoglycan biosynthesis. Cell wall formation. Adds enolpyruvyl to UDP-N-acetylglucosamine. The protein is UDP-N-acetylglucosamine 1-carboxyvinyltransferase 2 of Listeria monocytogenes serovar 1/2a (strain ATCC BAA-679 / EGD-e).